We begin with the raw amino-acid sequence, 260 residues long: Indole-3-glycerol phosphate synthase (260 aa).

Belongs to the TrpC family.

The catalysed reaction is 1-(2-carboxyphenylamino)-1-deoxy-D-ribulose 5-phosphate + H(+) = (1S,2R)-1-C-(indol-3-yl)glycerol 3-phosphate + CO2 + H2O. The protein operates within amino-acid biosynthesis; L-tryptophan biosynthesis; L-tryptophan from chorismate: step 4/5. This Lacticaseibacillus paracasei (strain ATCC 334 / BCRC 17002 / CCUG 31169 / CIP 107868 / KCTC 3260 / NRRL B-441) (Lactobacillus paracasei) protein is Indole-3-glycerol phosphate synthase.